The sequence spans 524 residues: Cytochrome P450 1A1 (524 aa).

A mitochondrial targeting signal region spans residues 33 to 44 (LRTQVPKGLKTP). Serine 71 carries O-linked (GlcNAc) serine glycosylation. Residue phenylalanine 228 coordinates substrate. Cysteine 461 is a binding site for heme.

It belongs to the cytochrome P450 family. In terms of assembly, interacts with cytosolic chaperones HSP70 and HSP90; this interaction is required for initial targeting to mitochondria. Interacts (via mitochondrial targeting signal) with TOMM40 (via N-terminus); this interaction is required for translocation across the mitochondrial outer membrane. Requires heme as cofactor.

The protein localises to the endoplasmic reticulum membrane. It localises to the mitochondrion inner membrane. The protein resides in the microsome membrane. It is found in the cytoplasm. It catalyses the reaction an organic molecule + reduced [NADPH--hemoprotein reductase] + O2 = an alcohol + oxidized [NADPH--hemoprotein reductase] + H2O + H(+). The enzyme catalyses estrone + reduced [NADPH--hemoprotein reductase] + O2 = 2-hydroxyestrone + oxidized [NADPH--hemoprotein reductase] + H2O + H(+). It carries out the reaction estrone + reduced [NADPH--hemoprotein reductase] + O2 = 4-hydroxyestrone + oxidized [NADPH--hemoprotein reductase] + H2O + H(+). The catalysed reaction is estrone + reduced [NADPH--hemoprotein reductase] + O2 = 6alpha-hydroxyestrone + oxidized [NADPH--hemoprotein reductase] + H2O + H(+). It catalyses the reaction estrone + reduced [NADPH--hemoprotein reductase] + O2 = 15alpha-hydroxyestrone + oxidized [NADPH--hemoprotein reductase] + H2O + H(+). The enzyme catalyses estrone + reduced [NADPH--hemoprotein reductase] + O2 = 16alpha-hydroxyestrone + oxidized [NADPH--hemoprotein reductase] + H2O + H(+). It carries out the reaction 17beta-estradiol + reduced [NADPH--hemoprotein reductase] + O2 = 2-hydroxy-17beta-estradiol + oxidized [NADPH--hemoprotein reductase] + H2O + H(+). The catalysed reaction is 17beta-estradiol + reduced [NADPH--hemoprotein reductase] + O2 = 4-hydroxy-17beta-estradiol + oxidized [NADPH--hemoprotein reductase] + H2O + H(+). It catalyses the reaction 17beta-estradiol + reduced [NADPH--hemoprotein reductase] + O2 = 6alpha-hydroxy-17beta-estradiol + oxidized [NADPH--hemoprotein reductase] + H2O + H(+). The enzyme catalyses 17beta-estradiol + reduced [NADPH--hemoprotein reductase] + O2 = 7alpha-hydroxy-17beta-estradiol + oxidized [NADPH--hemoprotein reductase] + H2O + H(+). It carries out the reaction 17beta-estradiol + reduced [NADPH--hemoprotein reductase] + O2 = 15alpha-hydroxy-17beta-estradiol + oxidized [NADPH--hemoprotein reductase] + H2O + H(+). The catalysed reaction is (5Z,8Z,11Z)-eicosatrienoate + reduced [NADPH--hemoprotein reductase] + O2 = 19-hydroxy-(5Z,8Z,11Z)-eicosatrienoate + oxidized [NADPH--hemoprotein reductase] + H2O + H(+). It catalyses the reaction (5Z,8Z,11Z,14Z)-eicosatetraenoate + reduced [NADPH--hemoprotein reductase] + O2 = 16-hydroxy-(5Z,8Z,11Z,14Z)-eicosatetraenoate + oxidized [NADPH--hemoprotein reductase] + H2O + H(+). The enzyme catalyses (5Z,8Z,11Z,14Z)-eicosatetraenoate + reduced [NADPH--hemoprotein reductase] + O2 = 17-hydroxy-(5Z,8Z,11Z,14Z)-eicosatetraenoate + oxidized [NADPH--hemoprotein reductase] + H2O + H(+). It carries out the reaction (5Z,8Z,11Z,14Z)-eicosatetraenoate + reduced [NADPH--hemoprotein reductase] + O2 = 18-hydroxy-(5Z,8Z,11Z,14Z)-eicosatetraenoate + oxidized [NADPH--hemoprotein reductase] + H2O + H(+). The catalysed reaction is (5Z,8Z,11Z,14Z)-eicosatetraenoate + reduced [NADPH--hemoprotein reductase] + O2 = 19-hydroxy-(5Z,8Z,11Z,14Z)-eicosatetraenoate + oxidized [NADPH--hemoprotein reductase] + H2O + H(+). It catalyses the reaction (5Z,8Z,11Z,14Z,17Z)-eicosapentaenoate + reduced [NADPH--hemoprotein reductase] + O2 = 19-hydroxy-(5Z,8Z,11Z,14Z,17Z)-eicosapentaenoate + oxidized [NADPH--hemoprotein reductase] + H2O + H(+). The enzyme catalyses (5Z,8Z,11Z,14Z)-eicosatetraenoate + reduced [NADPH--hemoprotein reductase] + O2 = (8R,9S)-epoxy-(5Z,11Z,14Z)-eicosatrienoate + oxidized [NADPH--hemoprotein reductase] + H2O + H(+). It carries out the reaction (5Z,8Z,11Z,14Z)-eicosatetraenoate + reduced [NADPH--hemoprotein reductase] + O2 = (11R,12S)-epoxy-(5Z,8Z,14Z)-eicosatrienoate + oxidized [NADPH--hemoprotein reductase] + H2O + H(+). The catalysed reaction is (5Z,8Z,11Z,14Z)-eicosatetraenoate + reduced [NADPH--hemoprotein reductase] + O2 = (14S,15R)-epoxy-(5Z,8Z,11Z)-eicosatrienoate + oxidized [NADPH--hemoprotein reductase] + H2O + H(+). It catalyses the reaction (5Z,8Z,11Z,14Z)-eicosatetraenoate + reduced [NADPH--hemoprotein reductase] + O2 = (14R,15S)-epoxy-(5Z,8Z,11Z)-eicosatrienoate + oxidized [NADPH--hemoprotein reductase] + H2O + H(+). The enzyme catalyses (5Z,8Z,11Z,14Z,17Z)-eicosapentaenoate + reduced [NADPH--hemoprotein reductase] + O2 = (17R,18S)-epoxy-(5Z,8Z,11Z,14Z)-eicosatetraenoate + oxidized [NADPH--hemoprotein reductase] + H2O + H(+). It carries out the reaction (4Z,7Z,10Z,13Z,16Z,19Z)-docosahexaenoate + reduced [NADPH--hemoprotein reductase] + O2 = (19S,20R)-epoxy-(4Z,7Z,10Z,13Z,16Z)-docosapentaenoate + oxidized [NADPH--hemoprotein reductase] + H2O + H(+). The catalysed reaction is (4Z,7Z,10Z,13Z,16Z,19Z)-docosahexaenoate + reduced [NADPH--hemoprotein reductase] + O2 = (19R,20S)-epoxy-(4Z,7Z,10Z,13Z,16Z)-docosapentaenoate + oxidized [NADPH--hemoprotein reductase] + H2O + H(+). It catalyses the reaction all-trans-retinol + reduced [NADPH--hemoprotein reductase] + O2 = all-trans-retinal + oxidized [NADPH--hemoprotein reductase] + 2 H2O + H(+). The enzyme catalyses all-trans-retinal + reduced [NADPH--hemoprotein reductase] + O2 = all-trans-retinoate + oxidized [NADPH--hemoprotein reductase] + H2O + 2 H(+). It carries out the reaction (13S)-hydroperoxy-(9Z,11E)-octadecadienoate = 13-oxo-(9Z,11E)-octadecadienoate + H2O. The catalysed reaction is (12S)-hydroperoxy-(5Z,8Z,10E,14Z)-eicosatetraenoate = 12-oxo-(5Z,8Z,10E,14Z)-eicosatetraenoate + H2O. It catalyses the reaction (15S)-hydroperoxy-(5Z,8Z,11Z,13E)-eicosatetraenoate = 15-oxo-(5Z,8Z,11Z,13E)-eicosatetraenoate + H2O. The enzyme catalyses (5S)-hydroperoxy-(6E,8Z,11Z,14Z)-eicosatetraenoate = 5-oxo-(6E,8Z,11Z,14Z)-eicosatetraenoate + H2O. Its pathway is steroid hormone biosynthesis. It participates in lipid metabolism; fatty acid metabolism. It functions in the pathway cofactor metabolism; retinol metabolism. A cytochrome P450 monooxygenase involved in the metabolism of various endogenous substrates, including fatty acids, steroid hormones and vitamins. Mechanistically, uses molecular oxygen inserting one oxygen atom into a substrate, and reducing the second into a water molecule, with two electrons provided by NADPH via cytochrome P450 reductase (CPR; NADPH-ferrihemoprotein reductase). Catalyzes the hydroxylation of carbon-hydrogen bonds. Exhibits high catalytic activity for the formation of hydroxyestrogens from estrone (E1) and 17beta-estradiol (E2), namely 2-hydroxy E1 and E2, as well as D-ring hydroxylated E1 and E2 at the C15alpha and C16alpha positions. Displays different regioselectivities for polyunsaturated fatty acids (PUFA) hydroxylation. Catalyzes the epoxidation of double bonds of certain PUFA. Converts arachidonic acid toward epoxyeicosatrienoic acid (EET) regioisomers, 8,9-, 11,12-, and 14,15-EET, that function as lipid mediators in the vascular system. Displays an absolute stereoselectivity in the epoxidation of eicosapentaenoic acid (EPA) producing the 17(R),18(S) enantiomer. May play an important role in all-trans retinoic acid biosynthesis in extrahepatic tissues. Catalyzes two successive oxidative transformation of all-trans retinol to all-trans retinal and then to the active form all-trans retinoic acid. May also participate in eicosanoids metabolism by converting hydroperoxide species into oxo metabolites (lipoxygenase-like reaction, NADPH-independent). This is Cytochrome P450 1A1 (CYP1A1) from Mesocricetus auratus (Golden hamster).